Reading from the N-terminus, the 355-residue chain is Probable nitronate monooxygenase (355 aa).

FMN-binding positions include N71, Q175, G180, G219, and 238–241 (QMGT).

This sequence belongs to the nitronate monooxygenase family. NMO class I subfamily. FMN is required as a cofactor.

It carries out the reaction 3 propionate 3-nitronate + 3 O2 + H2O = 3 3-oxopropanoate + 2 nitrate + nitrite + H2O2 + 3 H(+). Its function is as follows. Nitronate monooxygenase that uses molecular oxygen to catalyze the oxidative denitrification of alkyl nitronates. Acts on propionate 3-nitronate (P3N), the presumed physiological substrate. Probably functions in the detoxification of P3N, a metabolic poison produced by plants and fungi as a defense mechanism. This Staphylococcus saprophyticus subsp. saprophyticus (strain ATCC 15305 / DSM 20229 / NCIMB 8711 / NCTC 7292 / S-41) protein is Probable nitronate monooxygenase.